The primary structure comprises 72 residues: Heat shock factor-binding protein 1-like protein 1 (72 aa).

A coiled-coil region spans residues 12–62 (DLLQNAAENLLLEVEEHFQALTTTLNLRMEEMGSRIEDLQRNVDDLMTQAG).

This sequence belongs to the HSBP1 family.

This Mus musculus (Mouse) protein is Heat shock factor-binding protein 1-like protein 1 (Hsbp1l1).